The chain runs to 421 residues: O-glycoside alpha-1,2-mannosyltransferase homolog 5 (421 aa).

Glu-318 functions as the Nucleophile in the catalytic mechanism.

Belongs to the glycosyltransferase 15 family.

The protein localises to the cytoplasm. Probable mannosyltransferase involved in O-glycosylation of cell wall and secreted proteins. The chain is O-glycoside alpha-1,2-mannosyltransferase homolog 5 (omh5) from Schizosaccharomyces pombe (strain 972 / ATCC 24843) (Fission yeast).